Consider the following 300-residue polypeptide: MIQIYNRKTKQYDIEQVAGGRLLNTLYTTGRGRLGLKLLVKRKIYSSLTGFFCDSKISRKTIKGFAEKFSIDTNECESKVEEFKSFNEFFARKLKPSARVFDTSEEKLLSPGDGRLQAWENIDTEKLLQIKGMTYSLSELLQDEKLAREYSGGTYLILRLCPVDYHRFHFFDSGKCMETRKIKGEYYSVNPVALSKIPELFCRNKREYSIFKTDNFGDVLFIEVGATSVGSIIQTYIPGERISKGAEKGFFKFGGSTILLIFKKNMVKIDDDIIMQTKEGFETKVLAGEAIGNCIDKRTK.

Catalysis depends on charge relay system; for autoendoproteolytic cleavage activity residues D113, H169, and S256. The Schiff-base intermediate with substrate; via pyruvic acid; for decarboxylase activity role is filled by S256. A Pyruvic acid (Ser); by autocatalysis modification is found at S256.

The protein belongs to the phosphatidylserine decarboxylase family. PSD-B subfamily. Prokaryotic type II sub-subfamily. In terms of assembly, heterodimer of a large membrane-associated beta subunit and a small pyruvoyl-containing alpha subunit. It depends on pyruvate as a cofactor. Is synthesized initially as an inactive proenzyme. Formation of the active enzyme involves a self-maturation process in which the active site pyruvoyl group is generated from an internal serine residue via an autocatalytic post-translational modification. Two non-identical subunits are generated from the proenzyme in this reaction, and the pyruvate is formed at the N-terminus of the alpha chain, which is derived from the carboxyl end of the proenzyme. The autoendoproteolytic cleavage occurs by a canonical serine protease mechanism, in which the side chain hydroxyl group of the serine supplies its oxygen atom to form the C-terminus of the beta chain, while the remainder of the serine residue undergoes an oxidative deamination to produce ammonia and the pyruvoyl prosthetic group on the alpha chain. During this reaction, the Ser that is part of the protease active site of the proenzyme becomes the pyruvoyl prosthetic group, which constitutes an essential element of the active site of the mature decarboxylase.

Its subcellular location is the cell membrane. The enzyme catalyses a 1,2-diacyl-sn-glycero-3-phospho-L-serine + H(+) = a 1,2-diacyl-sn-glycero-3-phosphoethanolamine + CO2. It participates in phospholipid metabolism; phosphatidylethanolamine biosynthesis; phosphatidylethanolamine from CDP-diacylglycerol: step 2/2. Its function is as follows. Catalyzes the formation of phosphatidylethanolamine (PtdEtn) from phosphatidylserine (PtdSer). The polypeptide is Phosphatidylserine decarboxylase proenzyme (Ruminiclostridium cellulolyticum (strain ATCC 35319 / DSM 5812 / JCM 6584 / H10) (Clostridium cellulolyticum)).